Reading from the N-terminus, the 125-residue chain is Multifunctional methyltransferase subunit TRM112-like protein (125 aa).

The 118-residue stretch at Lys2 to Ser119 folds into the TRM112 domain. Residues Ser119 and Ser125 each carry the phosphoserine modification.

This sequence belongs to the TRM112 family. Part of the heterodimeric BUD23-TRM112 methyltransferase complex; this heterodimerization is necessary for the metabolic stability and activity of the catalytic subunit BUD23. Part of the heterodimeric N6AMT1-TRM112 methyltransferase complex; this heterodimerization is necessary for S-adenosyl-L-methionine-binding to N6AMT1/HEMK2. Part of the heterodimeric ALKBH8-TRM112 methyltransferase complex. Part of the heterodimeric METTL5-TRM112 methyltransferase complex; this heterodimerization is necessary for the stability of the catalytic subunit METTL5. Part of the heterodimeric THUMPD3-TRM112 methyltransferase complex; this complex forms an active tRNA methyltransferase, where TRMT112 acts as an activator of the catalytic subunit THUMPD3. Part of the heterodimeric THUMPD2-TRM112 methyltransferase complex; this complex forms an active tRNA methyltransferase, where TRMT112 acts as an activator of the catalytic subunit THUMPD2. Part of the heterodimeric TRMT11-TRM112 methyltransferase complex; this complex forms an active tRNA methyltransferase, where TRMT112 acts as an activator of the catalytic subunit TRMT11.

It localises to the nucleus. Its subcellular location is the nucleoplasm. The protein resides in the cytoplasm. It is found in the perinuclear region. In terms of biological role, acts as an activator of both rRNA/tRNA and protein methyltransferases. Together with methyltransferase BUD23, methylates the N(7) position of a guanine in 18S rRNA. The heterodimer with N6AMT1/HEMK2 catalyzes N5-methylation of ETF1 on 'Gln-185', using S-adenosyl L-methionine as methyl donor. The heterodimer with N6AMT1/HEMK2 also monomethylates 'Lys-12' of histone H4 (H4K12me1). The heterodimer with ALKBH8 catalyzes the methylation of 5-carboxymethyl uridine to 5-methylcarboxymethyl uridine at the wobble position of the anticodon loop in target tRNA species. Together with methyltransferase THUMPD3, catalyzes the formation of N(2)-methylguanosine at position 6 in a broad range of tRNA substrates and at position 7 of tRNA(Trp). Involved in the pre-rRNA processing steps leading to small-subunit rRNA production. Together with methyltransferase METTL5, specifically methylates the 6th position of adenine in position 1832 of 18S rRNA. The polypeptide is Multifunctional methyltransferase subunit TRM112-like protein (Homo sapiens (Human)).